The sequence spans 124 residues: UPF0102 protein PP_1324 (124 aa).

Belongs to the UPF0102 family.

The polypeptide is UPF0102 protein PP_1324 (Pseudomonas putida (strain ATCC 47054 / DSM 6125 / CFBP 8728 / NCIMB 11950 / KT2440)).